Here is a 266-residue protein sequence, read N- to C-terminus: Undecaprenyl-diphosphatase (266 aa).

The next 8 membrane-spanning stretches (helical) occupy residues 1 to 21 (MVVILAIVEGITEFLPISSTG), 43 to 63 (FLIIIQLGAIFSVVVYFWKDI), 81 to 101 (LKIIVGVLPAMVIGLLLDDII), 109 to 129 (VLIVAITLIAYGVIFIGIEVV), 159 to 179 (LAMIPGTSRSGATIIGALLLG), 183 to 203 (PLAAEFSFYLAIPTMFGATAL), 219 to 239 (YLALGSAIAFVVAYIVIKWFM), and 246 to 266 (SFASFGLYRIILGIIVIVLLY).

It belongs to the UppP family.

Its subcellular location is the cell inner membrane. The catalysed reaction is di-trans,octa-cis-undecaprenyl diphosphate + H2O = di-trans,octa-cis-undecaprenyl phosphate + phosphate + H(+). Its function is as follows. Catalyzes the dephosphorylation of undecaprenyl diphosphate (UPP). Confers resistance to bacitracin. This Fusobacterium nucleatum subsp. nucleatum (strain ATCC 25586 / DSM 15643 / BCRC 10681 / CIP 101130 / JCM 8532 / KCTC 2640 / LMG 13131 / VPI 4355) protein is Undecaprenyl-diphosphatase.